We begin with the raw amino-acid sequence, 2108 residues long: MNSVAGNKERLAVSTRGKKYGVNEVCSPTKPAAPFSPESWYRKAYEESRAGSRPTPEGAGSALGSSGTPSPGSGTSSPSSFTGSPGPASPGIGTSSPGSLGGSPGFGTGSPGSGSGGGSSPGSDRGVWCENCNARLVELKRQALRLLLPGPFPGKDPAFSAVIHDKLQVPNTIRKAWNDRDNRCDICATHLNQLKQEAIQMVLTLEQAAGSEHYDASPCSPPPLSNIPTLVGSRHVGGLQQPRDWAFVPAPCATSNYTGFANKHGSKPSSLGVSNGAEKKSGSPTHQAKVSLQMATSPSNGNILNSVAIQAHQYLDGTWSLSRTNGVTLYPYQISQLMTESSREGLTEAVLNRYNADKPSACSVPASQGSCVASETSTGTSVAASFFARAAQKLNLSSKKKKHRPSTSSAAEPPLFATSFSGILQTSPPPAPPCLLRAVNKVKDTPGLGKVKVMLRICSTLARDTSESSSFLKVDPRKKQITLYDPLTCGGQNAFQKRGNQVPPKMFAFDAVFPQDASQAEVCAGTVAEVIQSVVNGADGCVFCFGHAKLGKSYTMIGKDDSMQNLGIIPCAISWLFKLINERKEKTGARFSVRVSAVEVWGKEENLRDLLSEVATGSLQDGQSPGVYLCEDPICGTQLQNQSELRAPTAEKAAFFLDAAIASRRSHQQDCDEDDHRNSHVFFTLHIYQYRMEKSGKGGMSGGRSRLHLIDLGSCVKALSKNREGGSGLCLSLSALGNVILALVNGSKHIPYKESKLAMLLRESLGNMNCRTTMIAHISAAVGSYAETLSTIQIASRVLRMKKKKTKYTSSSSGGESSCEEGRMRRPTQLRPFHTRATVDPDFPIAHLSSDPDYSSSSEQSCDTVIYIGPNGTALSDKELTDNEGPPDFVPIVPALQKTRGDSRPAEAGEAAAGKSERDCLKCNTFAELQERLDCIDGSEEPSSFPFEELPAQFGPEQASRGPRLSQAAGASPLSESDKEDNGSEGQLTNREGPELPASKMQRSHSPVPAAAPAHSPSPASPRSVPGSSSQHSASPLVQSPSLQSSRESLNSCGFVEGKPRPMGSPRLGIASLSKTSEYKPPSSPSQRCKVYTQKGVLPSPAPLPPSSKDSGVASRESLLQPEVRTPPVGMSPQVLKKSMSAGSEGFPETPVDDEQQAATPSESKKEILSTTMVTVQQPLELNGEDELVFTLVEELTISGVLDSGRPTSIISFNSDCSARALASGSRPVSIISSISEDLECYSSTAPVSEVSITQFLPLPKMSLDEKAQDAGSRRSSISSWLSEMSAGSEGEQSCHSFIAQTCFGHGEAMAEPVASEFVSSLQNTAVVCREKPKASPDNLLILSEMGDDSFNKAAPIKGCKISTVSKAMVTISNTANLSSCEGYIPMKTNITVYPCIAMSPRNIQEPEAPTATPKAGPTLAQSRESKENSAKKEMKFEDPWLKREEEVKKETAHPNEEGMMRCETATGPSNAETRAEQEQDGKPSPGDRLSSSSGEVSASPVTDNFRRVVDGCEMALPGLATQSPVHPNKSVKSSSLPRAFQKASRQEEPDSLSYYCAAETNGVGAASGTPPSKATLEGKVASPKHCVLARPKGTPPLPPVRKSSLDQKNRASPQHSASGSGTSSPLNQPAAFPAGLPDEPSGKTKDASSSSKLFSAKLEQLASRSNSLGRATVSHYECLSLERAESLSSVSSRLHAGKDGTMPRAGRSLGRSAGTSPPSSGASPKAGQSKISAVSRLLLASPRARGPSASTTKTLSFSTKSLPQAVGQGSSSPPGGKHTPWSTQSLSRNRSSGLASKLPLRAVSGRISELLQGGAGARGLQLRAGPEAEARGGALAEDEPAAAHLLPSPYSKITPPRRPHRCSSGHGSDNSSVLSGELPPAMGKTALFYHSGGSSGYESVMRDSEATGSASSAQDSTSENSSSVGGRCRSLKTPKKRSNPGSQRRRLIPALSLDTSSPVRKPPNSTGVRWVDGPLRSSPRGLGEPFEIKVYEIDDVERLQRRRGGASKEAMCFNAKLKILEHRQQRIAEVRAKYEWLMKELEATKQYLMLDPNKWLSEFDLEQVWELDSLEYLEALECVTERLESRVNFCKAHLMMITCFDITSRRR.

2 disordered regions span residues 1–124 and 263–287; these read MNSV…PGSD and KHGSKPSSLGVSNGAEKKSGSPTHQ. Basic and acidic residues predominate over residues 40–50; the sequence is WYRKAYEESRA. The segment covering 58-98 has biased composition (low complexity); it reads GAGSALGSSGTPSPGSGTSSPSSFTGSPGPASPGIGTSSPG. Residues 99 to 120 are compositionally biased toward gly residues; it reads SLGGSPGFGTGSPGSGSGGGSS. A Kinesin motor domain is found at 450–801; that stretch reads KVKVMLRICS…IQIASRVLRM (352 aa). Residue 546 to 553 coordinates ATP; sequence GHAKLGKS. Disordered regions lie at residues 805–825, 876–917, 937–1166, 1406–1504, 1519–1653, 1685–1799, and 1824–1974; these read KTKYTSSSSGGESSCEEGRMR, SDKE…GKSE, DGSE…ESKK, EPEA…PVTD, GLAT…SSSK, AESL…ASKL, and RAGP…WVDG. The span at 1004 to 1046 shows a compositional bias: low complexity; it reads SHSPVPAAAPAHSPSPASPRSVPGSSSQHSASPLVQSPSLQSS. Positions 1424 to 1461 are enriched in basic and acidic residues; the sequence is RESKENSAKKEMKFEDPWLKREEEVKKETAHPNEEGMM. Residues 1491–1500 are compositionally biased toward low complexity; it reads SSSSGEVSAS. 2 stretches are compositionally biased toward polar residues: residues 1521–1537 and 1611–1628; these read ATQSPVHPNKSVKSSSL and RASPQHSASGSGTSSPLN. 2 stretches are compositionally biased toward low complexity: residues 1713 to 1730 and 1751 to 1763; these read SAGTSPPSSGASPKAGQS and STTKTLSFSTKSL. The segment covering 1781 to 1795 has biased composition (polar residues); sequence PWSTQSLSRNRSSGL. Over residues 1824 to 1836 the composition is skewed to low complexity; the sequence is RAGPEAEARGGAL. Thr1855 carries the phosphothreonine modification. Polar residues-rich tracts occupy residues 1866 to 1875 and 1907 to 1925; these read GHGSDNSSVL and ATGSASSAQDSTSENSSSV. The segment covering 1930 to 1948 has biased composition (basic residues); it reads RSLKTPKKRSNPGSQRRRL. Positions 1954–1968 are enriched in polar residues; it reads LDTSSPVRKPPNSTG. Ser1958 carries the post-translational modification Phosphoserine.

This sequence belongs to the TRAFAC class myosin-kinesin ATPase superfamily. Kinesin family. KIF26 subfamily. In terms of assembly, interacts with MYH10. Phosphorylation at Thr-1855 and Ser-1958 by CDKs, mainly CDK2 and CDK5, enhances the interaction with NEDD4, polyubiquitination, and subsequent proteasomal degradation. Phosphorylation occurs upon loss of interaction with microtubules. In terms of processing, polyubiquitinated by NEDD4, resulting in proteasomal degradation.

It is found in the cytoplasm. The protein resides in the cytoskeleton. Functionally, essential for embryonic kidney development. Plays an important role in the compact adhesion between mesenchymal cells adjacent to the ureteric buds, possibly by interacting with MYH10. This could lead to the establishment of the basolateral integrity of the mesenchyme and the polarized expression of ITGA8, which maintains the GDNF expression required for further ureteric bud attraction. Although it seems to lack ATPase activity it is constitutively associated with microtubules. This chain is Kinesin-like protein KIF26B (KIF26B), found in Homo sapiens (Human).